The sequence spans 171 residues: Transcriptional repressor NrdR (171 aa).

Residues 1-10 show a composition bias toward basic residues; sequence MQCPHCHHNG. The segment at 1–21 is disordered; it reads MQCPHCHHNGSRVVDSRPTDD. Residues 3 to 34 fold into a zinc finger; that stretch reads CPHCHHNGSRVVDSRPTDDGRVIRRRRECENC. Residues 49 to 139 enclose the ATP-cone domain; it reads LLVIKKNGAR…VYRQFKDMHV (91 aa). Residues 152-171 are disordered; sequence KVKLAKPSAKTTHAPKRKKD.

The protein belongs to the NrdR family. The cofactor is Zn(2+).

Its function is as follows. Negatively regulates transcription of bacterial ribonucleotide reductase nrd genes and operons by binding to NrdR-boxes. In Lactiplantibacillus plantarum (strain ATCC BAA-793 / NCIMB 8826 / WCFS1) (Lactobacillus plantarum), this protein is Transcriptional repressor NrdR.